Reading from the N-terminus, the 264-residue chain is Probable BRI1 kinase inhibitor 1 (264 aa).

2 disordered regions span residues 1–146 (MTMN…GLDV) and 165–240 (FSRH…SEES). Positions 9 to 30 (RSQPPPPHPPLFKPTTPPPPPL) are enriched in pro residues. Residues 31–40 (LSTSTSTSPP) are compositionally biased toward low complexity. The segment covering 77–97 (LSHNNYSSKANQHRQTGSSSS) has biased composition (polar residues). Residues 98 to 107 (SKEKDREYKA) show a composition bias toward basic and acidic residues. Composition is skewed to low complexity over residues 208–219 (LSSAPASLRASP) and 227–239 (VGGS…SSEE).

In terms of assembly, interacts with BRI1. In terms of processing, phosphorylated by BRI1.

Its function is as follows. Negative regulator of brassinosteroid signaling. The sequence is that of Probable BRI1 kinase inhibitor 1 (BKI1) from Oryza sativa subsp. japonica (Rice).